A 659-amino-acid polypeptide reads, in one-letter code: UvrABC system protein B (659 aa).

The Helicase ATP-binding domain occupies 25-414 (EGVRRGAREQ…PSLVVEQIVR (390 aa)). 38 to 45 (GATGTGKT) is an ATP binding site. The Beta-hairpin signature appears at 91-114 (YYDYYQPEAYIPTTDTYIEKDALI). Residues 431 to 597 (QIDDLYAEIR…TIVKPVRDVI (167 aa)) enclose the Helicase C-terminal domain. The UVR domain occupies 620-655 (PKVVAKLRKEMMQAAKDLDFERAAEIRDIIFELEKK).

This sequence belongs to the UvrB family. Forms a heterotetramer with UvrA during the search for lesions. Interacts with UvrC in an incision complex.

It localises to the cytoplasm. Functionally, the UvrABC repair system catalyzes the recognition and processing of DNA lesions. A damage recognition complex composed of 2 UvrA and 2 UvrB subunits scans DNA for abnormalities. Upon binding of the UvrA(2)B(2) complex to a putative damaged site, the DNA wraps around one UvrB monomer. DNA wrap is dependent on ATP binding by UvrB and probably causes local melting of the DNA helix, facilitating insertion of UvrB beta-hairpin between the DNA strands. Then UvrB probes one DNA strand for the presence of a lesion. If a lesion is found the UvrA subunits dissociate and the UvrB-DNA preincision complex is formed. This complex is subsequently bound by UvrC and the second UvrB is released. If no lesion is found, the DNA wraps around the other UvrB subunit that will check the other stand for damage. The chain is UvrABC system protein B from Symbiobacterium thermophilum (strain DSM 24528 / JCM 14929 / IAM 14863 / T).